Here is a 298-residue protein sequence, read N- to C-terminus: Tyrosine recombinase XerD (298 aa).

One can recognise a Core-binding (CB) domain in the interval 2-87; it reads KQDLARIEQF…AVRRLFQYLY (86 aa). Residues 108 to 292 form the Tyr recombinase domain; the sequence is RLPKDLSEAQ…ATERLRQLHQ (185 aa). Residues Arg-148, Lys-172, His-244, Arg-247, and His-270 contribute to the active site. The active-site O-(3'-phospho-DNA)-tyrosine intermediate is Tyr-279.

Belongs to the 'phage' integrase family. XerD subfamily. In terms of assembly, forms a cyclic heterotetrameric complex composed of two molecules of XerC and two molecules of XerD, in which XerC interacts with XerD via its C-terminal region, XerD interacts with XerC via its C-terminal region and so on.

It localises to the cytoplasm. With respect to regulation, ftsK may regulate the catalytic switch between XerC and XerD in the heterotetrameric complex during the two steps of the recombination process. Functionally, site-specific tyrosine recombinase, which acts by catalyzing the cutting and rejoining of the recombining DNA molecules. Binds cooperatively to specific DNA consensus sequences that are separated from XerC binding sites by a short central region, forming the heterotetrameric XerC-XerD complex that recombines DNA substrates. The complex is essential to convert dimers of the bacterial chromosome into monomers to permit their segregation at cell division. It also contributes to the segregational stability of plasmids. In the complex XerD specifically exchanges the bottom DNA strands. This chain is Tyrosine recombinase XerD, found in Escherichia coli O157:H7.